Consider the following 173-residue polypeptide: Co-chaperone protein HscB homolog (173 aa).

The 73-residue stretch at cysteine 5 to isoleucine 77 folds into the J domain.

The protein belongs to the HscB family. As to quaternary structure, interacts with HscA and stimulates its ATPase activity.

Functionally, co-chaperone involved in the maturation of iron-sulfur cluster-containing proteins. Seems to help targeting proteins to be folded toward HscA. This Pseudomonas entomophila (strain L48) protein is Co-chaperone protein HscB homolog.